The sequence spans 340 residues: 4-hydroxy-2-oxovalerate aldolase (340 aa).

The 253-residue stretch at 8 to 260 (VILHDMSLRD…SHGINLYDIM (253 aa)) folds into the Pyruvate carboxyltransferase domain. 16 to 17 (RD) provides a ligand contact to substrate. Mn(2+) is bound at residue Asp-17. His-20 serves as the catalytic Proton acceptor. The substrate site is built by Ser-170 and His-199. The Mn(2+) site is built by His-199 and His-201. Tyr-290 contacts substrate.

This sequence belongs to the 4-hydroxy-2-oxovalerate aldolase family.

It catalyses the reaction (S)-4-hydroxy-2-oxopentanoate = acetaldehyde + pyruvate. This Shewanella pealeana (strain ATCC 700345 / ANG-SQ1) protein is 4-hydroxy-2-oxovalerate aldolase.